The sequence spans 419 residues: Effector protein BipC (419 aa).

Disordered stretches follow at residues 62–91 (VAGS…TVSG) and 338–402 (LQSG…AKSQ). 2 stretches are compositionally biased toward basic and acidic residues: residues 71–91 (ELAR…TVSG) and 380–392 (TRDE…REAA).

Belongs to the SctB/SipC family.

It localises to the secreted. This Burkholderia pseudomallei (strain 1106a) protein is Effector protein BipC (bipC).